The chain runs to 86 residues: Large ribosomal subunit protein bL27 (86 aa).

Positions 1-22 (MAHKKAGGSSRNGRDSESKRLG) are disordered.

Belongs to the bacterial ribosomal protein bL27 family.

In Acidithiobacillus ferrooxidans (strain ATCC 23270 / DSM 14882 / CIP 104768 / NCIMB 8455) (Ferrobacillus ferrooxidans (strain ATCC 23270)), this protein is Large ribosomal subunit protein bL27.